We begin with the raw amino-acid sequence, 332 residues long: Methionine import ATP-binding protein MetN (332 aa).

The 240-residue stretch at 2–241 (IELKGLTKVF…PGSRLRELFY (240 aa)) folds into the ABC transporter domain. Residue 38 to 45 (GQSGAGKS) coordinates ATP.

Belongs to the ABC transporter superfamily. Methionine importer (TC 3.A.1.24) family. The complex is composed of two ATP-binding proteins (MetN), two transmembrane proteins (MetI) and a solute-binding protein (MetQ).

It is found in the cell membrane. It catalyses the reaction L-methionine(out) + ATP + H2O = L-methionine(in) + ADP + phosphate + H(+). It carries out the reaction D-methionine(out) + ATP + H2O = D-methionine(in) + ADP + phosphate + H(+). In terms of biological role, part of the ABC transporter complex MetNIQ involved in methionine import. Responsible for energy coupling to the transport system. This Symbiobacterium thermophilum (strain DSM 24528 / JCM 14929 / IAM 14863 / T) protein is Methionine import ATP-binding protein MetN.